Here is a 363-residue protein sequence, read N- to C-terminus: Cobalt-precorrin-5B C(1)-methyltransferase (363 aa).

The protein belongs to the CbiD family.

It catalyses the reaction Co-precorrin-5B + S-adenosyl-L-methionine = Co-precorrin-6A + S-adenosyl-L-homocysteine. The protein operates within cofactor biosynthesis; adenosylcobalamin biosynthesis; cob(II)yrinate a,c-diamide from sirohydrochlorin (anaerobic route): step 6/10. Its function is as follows. Catalyzes the methylation of C-1 in cobalt-precorrin-5B to form cobalt-precorrin-6A. In Treponema denticola (strain ATCC 35405 / DSM 14222 / CIP 103919 / JCM 8153 / KCTC 15104), this protein is Cobalt-precorrin-5B C(1)-methyltransferase.